The following is a 192-amino-acid chain: Imidazole glycerol phosphate synthase subunit HisH (192 aa).

The Glutamine amidotransferase type-1 domain maps to Met1–Asp192. Cys77 functions as the Nucleophile in the catalytic mechanism. Catalysis depends on residues His169 and Glu171.

In terms of assembly, heterodimer of HisH and HisF.

Its subcellular location is the cytoplasm. It catalyses the reaction 5-[(5-phospho-1-deoxy-D-ribulos-1-ylimino)methylamino]-1-(5-phospho-beta-D-ribosyl)imidazole-4-carboxamide + L-glutamine = D-erythro-1-(imidazol-4-yl)glycerol 3-phosphate + 5-amino-1-(5-phospho-beta-D-ribosyl)imidazole-4-carboxamide + L-glutamate + H(+). The catalysed reaction is L-glutamine + H2O = L-glutamate + NH4(+). The protein operates within amino-acid biosynthesis; L-histidine biosynthesis; L-histidine from 5-phospho-alpha-D-ribose 1-diphosphate: step 5/9. Its function is as follows. IGPS catalyzes the conversion of PRFAR and glutamine to IGP, AICAR and glutamate. The HisH subunit catalyzes the hydrolysis of glutamine to glutamate and ammonia as part of the synthesis of IGP and AICAR. The resulting ammonia molecule is channeled to the active site of HisF. The protein is Imidazole glycerol phosphate synthase subunit HisH of Staphylococcus epidermidis (strain ATCC 12228 / FDA PCI 1200).